A 232-amino-acid chain; its full sequence is 2,3,4,5-tetrahydropyridine-2,6-dicarboxylate N-acetyltransferase (232 aa).

It belongs to the transferase hexapeptide repeat family. DapH subfamily.

The catalysed reaction is (S)-2,3,4,5-tetrahydrodipicolinate + acetyl-CoA + H2O = L-2-acetamido-6-oxoheptanedioate + CoA. It functions in the pathway amino-acid biosynthesis; L-lysine biosynthesis via DAP pathway; LL-2,6-diaminopimelate from (S)-tetrahydrodipicolinate (acetylase route): step 1/3. Functionally, catalyzes the transfer of an acetyl group from acetyl-CoA to tetrahydrodipicolinate. In Streptococcus pneumoniae (strain Taiwan19F-14), this protein is 2,3,4,5-tetrahydropyridine-2,6-dicarboxylate N-acetyltransferase.